The primary structure comprises 570 residues: MFS-type transporter pigP (570 aa).

The tract at residues 14-54 (GMIKKAHPEQTPPDVSHEGDVATEKGDSDGVEQAAPTGPTD) is disordered. The span at 28–41 (VSHEGDVATEKGDS) shows a compositional bias: basic and acidic residues. Helical transmembrane passes span 65 to 85 (VMIM…TSII), 99 to 119 (LPDV…LVPL), 131 to 151 (WSFV…GVAT), 162 to 182 (VAGM…AGCV), 192 to 212 (GLLM…GGAF), 221 to 241 (CFYI…FVHI), and 263 to 283 (LVGF…LQYG). N-linked (GlcNAc...) asparagine glycosylation is present at asparagine 290. 7 consecutive transmembrane segments (helical) span residues 293 to 313 (VVIG…LWEW), 336 to 356 (VVYG…PIYF), 369 to 389 (VYIL…GALV), 392 to 412 (FGYY…GNGL), 425 to 445 (WIGY…MPII), 455 to 475 (LIPV…STFL), and 533 to 553 (VFYL…GMGW).

It belongs to the major facilitator superfamily. TCR/Tet family.

It localises to the cell membrane. Functionally, MFS-type transporter; part of the gene cluster that mediates the biosynthesis of azaphilone pigments (MonAzPs), very widely used as food colorant. This is MFS-type transporter pigP from Monascus ruber (Mold).